A 401-amino-acid polypeptide reads, in one-letter code: Type 3 secretion system translocon protein SctE (401 aa).

Residues 129–160 (IQRLHEQNMKKIEENQEKIKETEENAKQVKKS) adopt a coiled-coil conformation. Helical transmembrane passes span 166–186 (IFGW…VASG) and 225–245 (LGPI…VMTF). The stretch at 345-379 (LALNKADMAALQSIIDRLKEELSHLSESHRQVMEL) forms a coiled coil.

The protein belongs to the SctE/SipB/YopB family. The core secretion machinery of the T3SS is composed of approximately 20 different proteins, including cytoplasmic components, a base, an export apparatus and a needle. This subunit is involved in the formation of a pore, called the translocon, in host membrane. Interacts with YopD/SctB. Together with YopD/SctB, forms a multimeric integral membrane complex with a mass of between 500 and 700 kDa.

It is found in the secreted. The protein resides in the host membrane. Its function is as follows. Component of the type III secretion system (T3SS), also called injectisome, which is used to inject bacterial effector proteins into eukaryotic host cells. YopB/SctE and YopD/SctB are inserted into the host membrane where they form a pore and allow the translocation of effector proteins into the cytosol of target cells. Is an essential virulence determinant. Required for YopE translocation. Essential for the establishment of Yersinia infections in a mouse model system, but not for the targeting of effector Yops. May modulate the host's immune response at a distance from the site of infection. The sequence is that of Type 3 secretion system translocon protein SctE from Yersinia enterocolitica.